The chain runs to 495 residues: ATP-NADH kinase YEF1 (495 aa).

The tract at residues 442 to 480 (KYRLDSSKNGNDTISNPLESSCISSDAQDEERKSVTETE) is disordered. A compositionally biased stretch (polar residues) spans 448-467 (SKNGNDTISNPLESSCISSD).

This sequence belongs to the NAD kinase family. In terms of assembly, homooctamer. Mg(2+) serves as cofactor. It depends on Mn(2+) as a cofactor. Requires Co(2+) as cofactor. The cofactor is Ca(2+).

It carries out the reaction NADH + ATP = ADP + NADPH + H(+). ATP-NADH kinase with a low phosphorylation activity of both NADH and NAD(+) to produce NADP and NADPH by using ATP. UTR1 is responsible for essentially all of the NAD/NADH kinase activity resident in the cytoplasm, whereas POS5 is responsible for all mitochondrial NAD/NADH kinase activity and consequent mitochondrial genome maintenance. YEF1 can substitute for UTR1 when overexpressed. The polypeptide is ATP-NADH kinase YEF1 (YEF1) (Saccharomyces cerevisiae (strain ATCC 204508 / S288c) (Baker's yeast)).